A 211-amino-acid chain; its full sequence is Proteasome subunit beta 1 (211 aa).

Residues Met1–Gly17 constitute a propeptide, removed in mature form; by autocatalysis. Residue Thr18 is the Nucleophile of the active site.

The protein belongs to the peptidase T1B family. In terms of assembly, the 20S proteasome core is composed of 14 alpha and 14 beta subunits that assemble into four stacked heptameric rings, resulting in a barrel-shaped structure. The two inner rings, each composed of seven catalytic beta subunits, are sandwiched by two outer rings, each composed of seven alpha subunits. The catalytic chamber with the active sites is on the inside of the barrel. Has a gated structure, the ends of the cylinder being occluded by the N-termini of the alpha-subunits. Is capped at one or both ends by the proteasome regulatory ATPase, PAN.

The protein resides in the cytoplasm. It carries out the reaction Cleavage of peptide bonds with very broad specificity.. The formation of the proteasomal ATPase PAN-20S proteasome complex, via the docking of the C-termini of PAN into the intersubunit pockets in the alpha-rings, triggers opening of the gate for substrate entry. Interconversion between the open-gate and close-gate conformations leads to a dynamic regulation of the 20S proteasome proteolysis activity. Component of the proteasome core, a large protease complex with broad specificity involved in protein degradation. The polypeptide is Proteasome subunit beta 1 (Saccharolobus islandicus (strain M.16.27) (Sulfolobus islandicus)).